The primary structure comprises 504 residues: L-carnitine/gamma-butyrobetaine antiporter (504 aa).

12 helical membrane-spanning segments follow: residues 10–30 (IEPKVFFPPLIIVGILCWLTV), 51–71 (WGWAFEWYMVVMLFGWFWLVF), 92–112 (IFMMFASCTSAAVLFWGSIEI), 143–163 (GPLPWATYSFLSVAFAYFFFV), 195–215 (FYLVALIFAMGTSLGLATPLV), 231–251 (LDAIIITCWIILNAICVACGL), 263–283 (SYLSFLMLGWVFIVSGASFIM), 316–336 (WTVFYWAWWVIYAIQMSIFLA), 347–367 (LCFGMVLGLTASTWILWTVLG), 398–418 (WAALPLSTATMWGFFILCFIA), 446–466 (LLVRIGWSILVGIIGIVLLAL), and 475–495 (AIIAGGCPLFFVNIMVTLSFI).

It belongs to the BCCT transporter (TC 2.A.15) family. CaiT subfamily. In terms of assembly, homotrimer.

The protein resides in the cell inner membrane. It carries out the reaction 4-(trimethylamino)butanoate(in) + (R)-carnitine(out) = 4-(trimethylamino)butanoate(out) + (R)-carnitine(in). It functions in the pathway amine and polyamine metabolism; carnitine metabolism. In terms of biological role, catalyzes the exchange of L-carnitine for gamma-butyrobetaine. This is L-carnitine/gamma-butyrobetaine antiporter from Escherichia coli (strain K12 / MC4100 / BW2952).